The chain runs to 571 residues: uncharacterized protein (571 aa).

The next 5 helical transmembrane spans lie at 10–29 (VRLH…HFIG), 36–55 (VSLG…GLLF), 65–87 (WAFF…FASL), 96–118 (ALAV…LFRF), and 166–188 (ATTY…PRLL). In terms of domain architecture, RCK C-terminal spans 294 to 378 (TEVDDQELLS…IATAARNLGF (85 aa)). 6 helical membrane passes run 388–406 (LVYL…LLQV), 411–433 (VPLG…WLYS), 446–465 (LRLL…GLAA), 480–502 (LFAK…GLLL), 509–531 (LPPI…LNAL), and 546–568 (VPFA…CAVA).

It belongs to the AAE transporter (TC 2.A.81) family.

It is found in the cell membrane. This is an uncharacterized protein from Bordetella bronchiseptica (strain ATCC BAA-588 / NCTC 13252 / RB50) (Alcaligenes bronchisepticus).